We begin with the raw amino-acid sequence, 481 residues long: ATP synthase subunit beta (481 aa).

167-174 (GGAGVGKT) lines the ATP pocket.

It belongs to the ATPase alpha/beta chains family. In terms of assembly, F-type ATPases have 2 components, CF(1) - the catalytic core - and CF(0) - the membrane proton channel. CF(1) has five subunits: alpha(3), beta(3), gamma(1), delta(1), epsilon(1). CF(0) has three main subunits: a(1), b(2) and c(9-12). The alpha and beta chains form an alternating ring which encloses part of the gamma chain. CF(1) is attached to CF(0) by a central stalk formed by the gamma and epsilon chains, while a peripheral stalk is formed by the delta and b chains.

It is found in the cell membrane. It carries out the reaction ATP + H2O + 4 H(+)(in) = ADP + phosphate + 5 H(+)(out). Functionally, produces ATP from ADP in the presence of a proton gradient across the membrane. The catalytic sites are hosted primarily by the beta subunits. The sequence is that of ATP synthase subunit beta from Corynebacterium jeikeium (strain K411).